The sequence spans 176 residues: MSSNQQPVVLGKLGSCHGIKGWLRITAYTDSVEGIFDYSPWLIKENGEWREVKVTQWRYQGKAVVAELEGVNTREQAQMLTNCEIAILPEQMDALPEDEFYWRDLIGCEVVNTTGYNMGIVDQIVETGSNDVLLVKANAKDSFGKVERMIPFVPEQFIKTVDVQGKQILVDWDPDF.

The PRC barrel domain maps to 97–176; it reads EDEFYWRDLI…QILVDWDPDF (80 aa).

It belongs to the RimM family. As to quaternary structure, binds ribosomal protein uS19.

It localises to the cytoplasm. Functionally, an accessory protein needed during the final step in the assembly of 30S ribosomal subunit, possibly for assembly of the head region. Essential for efficient processing of 16S rRNA. May be needed both before and after RbfA during the maturation of 16S rRNA. It has affinity for free ribosomal 30S subunits but not for 70S ribosomes. The protein is Ribosome maturation factor RimM of Shewanella putrefaciens (strain CN-32 / ATCC BAA-453).